The following is a 102-amino-acid chain: ATP-dependent Clp protease adapter protein ClpS (102 aa).

This sequence belongs to the ClpS family. In terms of assembly, binds to the N-terminal domain of the chaperone ClpA.

Involved in the modulation of the specificity of the ClpAP-mediated ATP-dependent protein degradation. The chain is ATP-dependent Clp protease adapter protein ClpS from Shewanella oneidensis (strain ATCC 700550 / JCM 31522 / CIP 106686 / LMG 19005 / NCIMB 14063 / MR-1).